A 301-amino-acid chain; its full sequence is ATP synthase gamma chain (301 aa).

It belongs to the ATPase gamma chain family. As to quaternary structure, F-type ATPases have 2 components, CF(1) - the catalytic core - and CF(0) - the membrane proton channel. CF(1) has five subunits: alpha(3), beta(3), gamma(1), delta(1), epsilon(1). CF(0) has three main subunits: a, b and c.

The protein localises to the cell inner membrane. Its function is as follows. Produces ATP from ADP in the presence of a proton gradient across the membrane. The gamma chain is believed to be important in regulating ATPase activity and the flow of protons through the CF(0) complex. The polypeptide is ATP synthase gamma chain (Bordetella parapertussis (strain 12822 / ATCC BAA-587 / NCTC 13253)).